The chain runs to 347 residues: GMP reductase (347 aa).

108–131 (DDFTKTRQILAMSSALRFICVDVA) provides a ligand contact to NADP(+). Residues G181 and G183 each contribute to the K(+) site. Catalysis depends on C186, which acts as the Thioimidate intermediate. 216 to 239 (IVGDGGCTCPGDVAKAFGGGADFV) provides a ligand contact to NADP(+).

It belongs to the IMPDH/GMPR family. GuaC type 1 subfamily. Homotetramer.

It catalyses the reaction IMP + NH4(+) + NADP(+) = GMP + NADPH + 2 H(+). Its function is as follows. Catalyzes the irreversible NADPH-dependent deamination of GMP to IMP. It functions in the conversion of nucleobase, nucleoside and nucleotide derivatives of G to A nucleotides, and in maintaining the intracellular balance of A and G nucleotides. The chain is GMP reductase from Aeromonas hydrophila subsp. hydrophila (strain ATCC 7966 / DSM 30187 / BCRC 13018 / CCUG 14551 / JCM 1027 / KCTC 2358 / NCIMB 9240 / NCTC 8049).